The following is a 1107-amino-acid chain: Voltage-gated delayed rectifier potassium channel KCNH8 (1107 aa).

At methionine 1–aspartate 225 the chain is on the cytoplasmic side. The region spanning isoleucine 18–lysine 90 is the PAS domain. The PAC domain occupies phenylalanine 93–lysine 145. A helical transmembrane segment spans residues tryptophan 226 to isoleucine 246. The Extracellular portion of the chain corresponds to glycine 247–arginine 255. A helical membrane pass occupies residues serine 256–phenylalanine 276. At arginine 277–tyrosine 298 the chain is on the cytoplasmic side. A helical transmembrane segment spans residues valine 299–phenylalanine 319. Residue asparagine 320 is glycosylated (N-linked (GlcNAc...) asparagine). Topologically, residues asparagine 320–valine 327 are extracellular. Residues histidine 328–tyrosine 348 form a helical; Voltage-sensor membrane-spanning segment. Topologically, residues serine 349 to threonine 357 are cytoplasmic. A helical membrane pass occupies residues leucine 358–glycine 378. The Extracellular portion of the chain corresponds to lysine 379–serine 419. N-linked (GlcNAc...) asparagine glycosylation occurs at asparagine 409. The pore-forming intramembrane region spans alanine 420–valine 440. The short motif at serine 434–asparagine 439 is the Selectivity filter element. Topologically, residues serine 441–lysine 448 are extracellular. A helical membrane pass occupies residues isoleucine 449 to valine 469. Topologically, residues threonine 470–valine 1107 are cytoplasmic. The interval leucine 551–aspartate 668 is cNMP-binding domain. Residues serine 686 to isoleucine 702 are compositionally biased toward polar residues. Disordered stretches follow at residues serine 686–valine 742, histidine 764–glutamate 791, glutamate 818–glycine 847, and valine 961–proline 989. Positions valine 710–alanine 724 are enriched in acidic residues. Positions valine 961–arginine 972 are enriched in polar residues.

It belongs to the potassium channel family. H (Eag) (TC 1.A.1.20) subfamily. Kv12.1/KCNH8 sub-subfamily. The potassium channel is probably composed of a homo- or heterotetrameric complex of pore-forming alpha subunits that can associate with modulating beta subunits. As to expression, primarily expressed in the nervous system.

The protein localises to the membrane. The enzyme catalyses K(+)(in) = K(+)(out). Its function is as follows. Pore-forming (alpha) subunit of a voltage-gated delayed rectifier potassium channel that mediates outward-rectifying potassium currents. Elicits a slowly activating, non-inactivating and slowly deactivation outwards potassium current at depolarizating voltages from -30 mV to +50mV. Shows no obvious change in the activation rate from different holding potentials. Activation is strongly dependent on the pH of the external solution. The chain is Voltage-gated delayed rectifier potassium channel KCNH8 from Homo sapiens (Human).